A 450-amino-acid chain; its full sequence is Phosphoglucosamine mutase (450 aa).

The Phosphoserine intermediate role is filled by Ser-101. Positions 101, 241, 243, and 245 each coordinate Mg(2+). Ser-101 carries the phosphoserine modification.

Belongs to the phosphohexose mutase family. It depends on Mg(2+) as a cofactor. Activated by phosphorylation.

The catalysed reaction is alpha-D-glucosamine 1-phosphate = D-glucosamine 6-phosphate. Functionally, catalyzes the conversion of glucosamine-6-phosphate to glucosamine-1-phosphate. In Listeria monocytogenes serovar 1/2a (strain ATCC BAA-679 / EGD-e), this protein is Phosphoglucosamine mutase.